The chain runs to 302 residues: tRNA dimethylallyltransferase (302 aa).

10 to 17 (GPTAIGKT) contributes to the ATP binding site. A substrate-binding site is contributed by 12-17 (TAIGKT). The segment at 35–38 (DSRQ) is interaction with substrate tRNA.

This sequence belongs to the IPP transferase family. In terms of assembly, monomer. It depends on Mg(2+) as a cofactor.

The enzyme catalyses adenosine(37) in tRNA + dimethylallyl diphosphate = N(6)-dimethylallyladenosine(37) in tRNA + diphosphate. Its function is as follows. Catalyzes the transfer of a dimethylallyl group onto the adenine at position 37 in tRNAs that read codons beginning with uridine, leading to the formation of N6-(dimethylallyl)adenosine (i(6)A). This Christiangramia forsetii (strain DSM 17595 / CGMCC 1.15422 / KT0803) (Gramella forsetii) protein is tRNA dimethylallyltransferase.